The following is a 424-amino-acid chain: Histidine--tRNA ligase (424 aa).

This sequence belongs to the class-II aminoacyl-tRNA synthetase family. Homodimer.

The protein resides in the cytoplasm. The catalysed reaction is tRNA(His) + L-histidine + ATP = L-histidyl-tRNA(His) + AMP + diphosphate + H(+). The sequence is that of Histidine--tRNA ligase from Bacillus licheniformis (strain ATCC 14580 / DSM 13 / JCM 2505 / CCUG 7422 / NBRC 12200 / NCIMB 9375 / NCTC 10341 / NRRL NRS-1264 / Gibson 46).